The following is a 425-amino-acid chain: 2-methylserine hydroxymethyltransferase (425 aa).

(6S)-5,6,7,8-tetrahydrofolate is bound by residues L126 and G130–L132. Residue K235 is modified to N6-(pyridoxal phosphate)lysine.

Belongs to the SHMT family. In terms of assembly, homodimer. It depends on pyridoxal 5'-phosphate as a cofactor.

The protein resides in the cytoplasm. The enzyme catalyses (6R)-5,10-methylene-5,6,7,8-tetrahydrofolate + D-alanine + H2O = 2-methylserine + (6S)-5,6,7,8-tetrahydrofolate. It functions in the pathway one-carbon metabolism; tetrahydrofolate interconversion. Catalyzes the reversible interconversion of alpha-methyl-L-serine to D-alanine with tetrahydrofolate (THF) serving as the one-carbon carrier. Cannot use alpha-methyl-D-serine, L-serine, D-serine or L-alanine. This is 2-methylserine hydroxymethyltransferase from Aminobacter sp.